The following is a 241-amino-acid chain: Leucyl/phenylalanyl-tRNA--protein transferase (241 aa).

It belongs to the L/F-transferase family.

It is found in the cytoplasm. It catalyses the reaction N-terminal L-lysyl-[protein] + L-leucyl-tRNA(Leu) = N-terminal L-leucyl-L-lysyl-[protein] + tRNA(Leu) + H(+). The catalysed reaction is N-terminal L-arginyl-[protein] + L-leucyl-tRNA(Leu) = N-terminal L-leucyl-L-arginyl-[protein] + tRNA(Leu) + H(+). The enzyme catalyses L-phenylalanyl-tRNA(Phe) + an N-terminal L-alpha-aminoacyl-[protein] = an N-terminal L-phenylalanyl-L-alpha-aminoacyl-[protein] + tRNA(Phe). Functions in the N-end rule pathway of protein degradation where it conjugates Leu, Phe and, less efficiently, Met from aminoacyl-tRNAs to the N-termini of proteins containing an N-terminal arginine or lysine. This chain is Leucyl/phenylalanyl-tRNA--protein transferase, found in Neisseria meningitidis serogroup C (strain 053442).